A 692-amino-acid polypeptide reads, in one-letter code: A-type ATP synthase subunit I (692 aa).

The next 7 helical transmembrane spans lie at 389-409 (GIMLTDAVYGLLLTIIGLFIW), 422-442 (LGYILTLAGISTVIMGIITGG), 494-514 (ILVFSIFVGLIHLLIGLFVGF), 531-551 (GVWILLILSIFVGIGLMFAGA), 553-573 (TMIAGGIIGIFVVLAILASMY), 602-622 (ARLLALCLATGGLAMAVNIMA), and 624-644 (LVGESIPVIGIIVAIIILLVG).

This sequence belongs to the V-ATPase 116 kDa subunit family. As to quaternary structure, the A-type ATPase is composed of subunits A(3), B(3), C, D, E(1 or 2), F, H(2), I and K(x).

The protein localises to the cell membrane. Its function is as follows. Component of the A-type ATP synthase that produces ATP from ADP in the presence of a proton gradient across the membrane. In Methanocaldococcus jannaschii (strain ATCC 43067 / DSM 2661 / JAL-1 / JCM 10045 / NBRC 100440) (Methanococcus jannaschii), this protein is A-type ATP synthase subunit I.